The following is a 136-amino-acid chain: DNA-binding protein H-NS (136 aa).

Positions 13–67 (TLRAQARECTLETLEEMLEKLEVVVNERREEDSQAQAEIEERTRKLQQYREMLIA) form a coiled coil. Residues 113–118 (QGRTPA) mediate DNA binding.

Belongs to the histone-like protein H-NS family. As to quaternary structure, interacts with YmoA in the absence of DNA. Homodimer that oligomerizes on DNA into higher-order complexes that form bridges between disparate regions of DNA compacting it. Interacts with YmoA.

It localises to the cytoplasm. It is found in the nucleoid. Functionally, a DNA-binding protein implicated in transcriptional repression and chromosome organization and compaction. Binds nucleation sites in AT-rich DNA and bridges them, forming higher-order nucleoprotein complexes and condensing the chromosome. As many horizontally transferred genes are AT-rich, it plays a central role in silencing foreign genes. A subset of genes are repressed by H-NS in association with YmoA. Complements a number of hns deficiencies in E.coli; represses the bgl operon, represses hemolysin expression. This Yersinia enterocolitica protein is DNA-binding protein H-NS.